The primary structure comprises 298 residues: Replication protein A 32 kDa subunit B (298 aa).

Positions Val-89–Ile-163 form a DNA-binding region, OB.

Belongs to the replication factor A protein 2 family. Heterotrimer of RPA1, RPA2 and RPA3 (canonical replication protein A complex). Interacts with RPA1A and RPA3. Phosphorylated in a cell-cycle-dependent manner (from the S phase until mitosis). In response to DNA damage, recruited to DNA-repair nuclear foci, as a hypophosphorylated form.

The protein resides in the nucleus. Functionally, component of the replication protein A complex (RPA) required for DNA recombination, repair and replication. The activity of RPA is mediated by single-stranded DNA binding and protein interactions. The sequence is that of Replication protein A 32 kDa subunit B (RPA2B) from Oryza sativa subsp. japonica (Rice).